The following is a 1165-amino-acid chain: MLEGPILAVSRQTKSVVDIPGAPQRYSFAKVSAPIEVPGLLDLQLDSYSWLIGTPEWRARQKEEFGEGARVTSGLENILEELSPIQDYSGNMSLSLSEPRFEDVKNTIDEAKEKDINYAAPLYVTAEFVNNTTGEIKSQTVFIGDFPMMTDKGTFIINGTERVVVSQLVRSPGVYFDQTIDKSTERPLHAVKVIPSRGAWLEFDVDKRDSVGVRIDRKRRQPVTVLLKALGWTTEQITERFGFSEIMMSTLESDGVANTDEALLEIYRKQRPGEQPTRDLAQSLLDNSFFRAKRYDLARVGRYKINRKLGLGGDHDGLMTLTEEDIATTIEYLVRLHAGERVMTSPNGEEIPVETDDIDHFGNRRLRTVGELIQNQVRVGLSRMERVVRERMTTQDAESITPTSLINVRPVSAAIREFFGTSQLSQFMDQNNSLSGLTHKRRLSALGPGGLSRERAGIEVRDVHPSHYGRMCPIETPEGPNIGLIGSLASYARVNPFGFIETPYRRIIDGKLTDQIDYLTADEEDRFVVAQANTHYDEEGNITDETVTVRLKDGDIAMVGRNAVDYMDVSPRQMVSVGTAMIPFLEHDDANRALMGANMQKQAVPLIRAEAPFVGTGMEQRAAYDAGDLVITPVAGVVENVSADFITIMADDGKRETYLLRKFQRTNQGTSYNQKPLVNLGERVEAGQVIADGPGTFNGEMSLGRNLLVAFMPWEGHNYEDAIILNQNIVEQDILTSIHIEEHEIDARDTKLGAEEITRDIPNVSEEVLKDLDDRGIVRIGADVRDGDILVGKVTPKGETELTPEERLLRAIFGEKAREVRDTSMKVPHGETGKVIGVRHFSREDDDDLAPGVNEMIRIYVAQKRKIQDGDKLAGRHGNKGVVGKILPQEDMPFLPDGTPVDIILNTHGVPRRMNIGQVLETHLGWLASAGWSVDPEDPENAELVKTLPADLLEVPAGSLTATPVFDGASNEELSGLLANSRPNRDGDVMVNADGKATLIDGRSGEPYPYPVSIGYMYMLKLHHLVDEKIHARSTGPYSMITQQPLGGKAQFGGQRFGEMEVWAMQAYGAAYTLQELLTIKSDDVVGRVKVYEAIVKGENIPDPGIPESFKVLLKELQSLCLNVEVLSADGTPMELAGDDDDFDQAGASLGINLSRDERSDADTA.

This sequence belongs to the RNA polymerase beta chain family. As to quaternary structure, the RNAP catalytic core consists of 2 alpha, 1 beta, 1 beta' and 1 omega subunit. When a sigma factor is associated with the core the holoenzyme is formed, which can initiate transcription.

The enzyme catalyses RNA(n) + a ribonucleoside 5'-triphosphate = RNA(n+1) + diphosphate. Its function is as follows. DNA-dependent RNA polymerase catalyzes the transcription of DNA into RNA using the four ribonucleoside triphosphates as substrates. The protein is DNA-directed RNA polymerase subunit beta of Corynebacterium glutamicum (strain R).